The sequence spans 340 residues: ATPase get3 (340 aa).

An ATP-binding site is contributed by 34–41 (KGGVGKTT). D63 is an active-site residue. ATP contacts are provided by E242 and N269. C280 and C283 together coordinate Zn(2+).

The protein belongs to the arsA ATPase family. Homodimer.

Its subcellular location is the cytoplasm. It is found in the endoplasmic reticulum. Functionally, ATPase required for the post-translational delivery of tail-anchored (TA) proteins to the endoplasmic reticulum. Recognizes and selectively binds the transmembrane domain of TA proteins in the cytosol. This complex then targets to the endoplasmic reticulum by membrane-bound receptors, where the tail-anchored protein is released for insertion. This process is regulated by ATP binding and hydrolysis. ATP binding drives the homodimer towards the closed dimer state, facilitating recognition of newly synthesized TA membrane proteins. ATP hydrolysis is required for insertion. Subsequently, the homodimer reverts towards the open dimer state, lowering its affinity for the membrane-bound receptor, and returning it to the cytosol to initiate a new round of targeting. In Sclerotinia sclerotiorum (strain ATCC 18683 / 1980 / Ss-1) (White mold), this protein is ATPase get3 (get3).